Consider the following 289-residue polypeptide: GTPase Era (289 aa).

Residues 2–167 enclose the Era-type G domain; that stretch reads KSGFVSIIGR…LDEICKLLPE (166 aa). A G1 region spans residues 10–17; the sequence is GRTNAGKS. 10-17 is a GTP binding site; that stretch reads GRTNAGKS. Residues 36–40 are G2; sequence NATRR. The segment at 57 to 60 is G3; the sequence is DTPG. GTP is bound by residues 57-61 and 116-119; these read DTPGL and TKVD. The interval 116-119 is G4; that stretch reads TKVD. The segment at 146-148 is G5; that stretch reads FST. Positions 194-274 constitute a KH type-2 domain; sequence IYENLSDEIP…FLKLDVVVKK (81 aa).

This sequence belongs to the TRAFAC class TrmE-Era-EngA-EngB-Septin-like GTPase superfamily. Era GTPase family. Monomer.

Its subcellular location is the cytoplasm. The protein resides in the cell inner membrane. Its function is as follows. An essential GTPase that binds both GDP and GTP, with rapid nucleotide exchange. Plays a role in 16S rRNA processing and 30S ribosomal subunit biogenesis and possibly also in cell cycle regulation and energy metabolism. The sequence is that of GTPase Era from Campylobacter concisus (strain 13826).